Reading from the N-terminus, the 104-residue chain is Nucleoid-associated protein EF_2780 (104 aa).

This sequence belongs to the YbaB/EbfC family. In terms of assembly, homodimer.

The protein resides in the cytoplasm. The protein localises to the nucleoid. Its function is as follows. Binds to DNA and alters its conformation. May be involved in regulation of gene expression, nucleoid organization and DNA protection. The chain is Nucleoid-associated protein EF_2780 from Enterococcus faecalis (strain ATCC 700802 / V583).